We begin with the raw amino-acid sequence, 461 residues long: Ubiquinone hydroxylase UbiM (461 aa).

Belongs to the UbiH/COQ6 family. FAD serves as cofactor.

It carries out the reaction a 2-(all-trans-polyprenyl)phenol + NADPH + O2 + H(+) = a 3-(all-trans-polyprenyl)benzene-1,2-diol + NADP(+) + H2O. The catalysed reaction is a 5-methoxy-2-methyl-3-(all-trans-polyprenyl)benzene-1,4-diol + AH2 + O2 = a 3-demethylubiquinol + A + H2O. It functions in the pathway cofactor biosynthesis; ubiquinone biosynthesis. Catalyzes the hydroxylation of three positions of the aromatic ring during ubiquinone biosynthesis. The protein is Ubiquinone hydroxylase UbiM of Neisseria meningitidis serogroup C / serotype 2a (strain ATCC 700532 / DSM 15464 / FAM18).